A 443-amino-acid polypeptide reads, in one-letter code: Chromosomal replication initiator protein DnaA (443 aa).

A domain I, interacts with DnaA modulators region spans residues 1–80; sequence MTSQFASLWQ…LGESVEVRFF (80 aa). The tract at residues 80-104 is domain II; that stretch reads FTPSADSRRSEPSRRPVATEESSPP. Residues 83–105 are disordered; it reads SADSRRSEPSRRPVATEESSPPL. Residues 85-97 show a composition bias toward basic and acidic residues; the sequence is DSRRSEPSRRPVA. Residues 105 to 321 form a domain III, AAA+ region region; sequence LLNPKYTFDT…GALNRVIAYA (217 aa). Residues Gly-149, Gly-151, Lys-152, and Thr-153 each contribute to the ATP site. The domain IV, binds dsDNA stretch occupies residues 322 to 443; sequence NLSGKSLTSE…QVLKEKIQRA (122 aa).

The protein belongs to the DnaA family. In terms of assembly, oligomerizes as a right-handed, spiral filament on DNA at oriC.

The protein localises to the cytoplasm. Functionally, plays an essential role in the initiation and regulation of chromosomal replication. ATP-DnaA binds to the origin of replication (oriC) to initiate formation of the DNA replication initiation complex once per cell cycle. Binds the DnaA box (a 9 base pair repeat at the origin) and separates the double-stranded (ds)DNA. Forms a right-handed helical filament on oriC DNA; dsDNA binds to the exterior of the filament while single-stranded (ss)DNA is stabiized in the filament's interior. The ATP-DnaA-oriC complex binds and stabilizes one strand of the AT-rich DNA unwinding element (DUE), permitting loading of DNA polymerase. After initiation quickly degrades to an ADP-DnaA complex that is not apt for DNA replication. Binds acidic phospholipids. This is Chromosomal replication initiator protein DnaA from Heliobacterium modesticaldum (strain ATCC 51547 / Ice1).